A 1072-amino-acid chain; its full sequence is Zinc finger MIZ domain-containing protein 1 (1072 aa).

Residues 1 to 120 (MNSMDRHIQQ…HQKSRQNDPP (120 aa)) are sufficient for transactivation activity; sufficient for interaction with NOTCH1. Lysine 91 is covalently cross-linked (Glycyl lysine isopeptide (Lys-Gly) (interchain with G-Cter in SUMO2)). Disordered stretches follow at residues 112-141 (QKSRQNDPPGKLPMQPPLSSMSSMKPTLSH) and 362-538 (TPSG…PYLS). A compositionally biased stretch (low complexity) spans 128-141 (PLSSMSSMKPTLSH). The segment covering 419 to 436 (YGNQQYGPNSQFPTQPGQ) has biased composition (polar residues). Residues 437 to 446 (YPTPNPPRPL) show a composition bias toward pro residues. The span at 489-501 (SSGSSYSSYSQGS) shows a compositional bias: low complexity. Pro residues predominate over residues 517–528 (SPVPGNPTPPMT). The SP-RING-type zinc finger occupies 734-815 (GEDGVEQTAI…MWGILNAIQH (82 aa)). Residues cysteine 765, histidine 767, cysteine 788, and cysteine 791 each contribute to the Zn(2+) site. Residues lysine 841 and lysine 850 each participate in a glycyl lysine isopeptide (Lys-Gly) (interchain with G-Cter in SUMO2) cross-link. The interval 844–1072 (PDGIPSKRFK…DDLLSLFENN (229 aa)) is transactivation domain. Over residues 875 to 886 (GPSPYPLPPPPG) the composition is skewed to pro residues. The interval 875 to 1072 (GPSPYPLPPP…DDLLSLFENN (198 aa)) is disordered. Composition is skewed to polar residues over residues 888 to 902 (TSSNDYSSQGNNYQG) and 958 to 968 (SSDQPHPSIQQ). Positions 988-1001 (APPPSQPPRQPPQA) are enriched in pro residues. Low complexity predominate over residues 1045–1072 (PDELLSYLDPPDLPSNSNDDLLSLFENN).

Interacts with AR, but not with ESR1, NR3C1, PGR, THRB nor VDR. Interacts with NOTCH1 and RBPJ. Interacts with SMARCA4. Interacts (via SP-RING-type domain) with SMAD3 and SMAD4 (via MH2 domain). Expressed in brain.

Its subcellular location is the nucleus. It localises to the nucleoplasm. The protein resides in the cytoplasm. Functionally, acts as a transcriptional coactivator. Increases ligand-dependent transcriptional activity of AR and promotes AR sumoylation. The stimulation of AR activity is dependent upon sumoylation. Also functions as a transcriptional coactivator in the TGF-beta signaling pathway by increasing the activity of the SMAD3/SMAD4 transcriptional complex. Involved in transcriptional activation of a subset of NOTCH1 target genes including MYC. Involved in thymocyte and T cell development. Involved in the regulation of postmitotic positioning of pyramidal neurons in the developing cerebral cortex. This chain is Zinc finger MIZ domain-containing protein 1 (Zmiz1), found in Mus musculus (Mouse).